The chain runs to 680 residues: Fermitin family homolog 2 (680 aa).

Residues 40–81 form an interaction with membranes containing phosphatidylinositol phosphate region; sequence HIGGVMLKLVEKLDVKKDWSDHALWWEKKRTWLLKTHWTLDK. Residues 141-162 are disordered; sequence LKKPRDPTKKKKKKLDDQSEDE. A phosphoserine mark is found at Ser-159, Ser-181, Ser-339, and Ser-351. The FERM domain occupies 189-661; it reads MTPTYDAHDG…GYIFLSTRAK (473 aa). The region spanning 380–476 is the PH domain; the sequence is KVFKPKKLTL…WMAACRLASK (97 aa). Lys-383 serves as a coordination point for a 1,2-diacyl-sn-glycero-3-phospho-(1D-myo-inositol-3,4,5-trisphosphate). Residue Ser-666 is modified to Phosphoserine.

Belongs to the kindlin family. In terms of assembly, interacts with ITGB1; the interaction is inhibited in presence of ITGB1BP1. Interacts with FBLIM1. Interacts with active, unphosphorylated CTNNB1. Identified in a complex with CTNNB1 and TCF7L2/TCF4. Interacts with ILK, ITGB1 and ITGB3. Detected in adult heart muscle (at protein level). Detected in heart, skeletal muscle and testis.

It is found in the cytoplasm. The protein localises to the cell cortex. It localises to the cytoskeleton. Its subcellular location is the stress fiber. The protein resides in the cell junction. It is found in the focal adhesion. The protein localises to the membrane. It localises to the cell projection. Its subcellular location is the lamellipodium membrane. The protein resides in the nucleus. It is found in the myofibril. The protein localises to the sarcomere. It localises to the i band. Its subcellular location is the cell surface. In terms of biological role, scaffolding protein that enhances integrin activation mediated by TLN1 and/or TLN2, but activates integrins only weakly by itself. Binds to membranes enriched in phosphoinositides. Enhances integrin-mediated cell adhesion onto the extracellular matrix and cell spreading; this requires both its ability to interact with integrins and with phospholipid membranes. Required for the assembly of focal adhesions. Participates in the connection between extracellular matrix adhesion sites and the actin cytoskeleton and also in the orchestration of actin assembly and cell shape modulation. Recruits FBLIM1 to focal adhesions. Plays a role in the TGFB1 and integrin signaling pathways. Stabilizes active CTNNB1 and plays a role in the regulation of transcription mediated by CTNNB1 and TCF7L2/TCF4 and in Wnt signaling. This chain is Fermitin family homolog 2 (Fermt2), found in Mus musculus (Mouse).